The sequence spans 160 residues: Protein FrzA (160 aa).

Residues 14–155 (EQEFFCFRVG…FSKLLQTARQ (142 aa)) enclose the CheW-like domain.

Necessary for proper aggregation of cells to form fruiting bodies. FRZ genes define a system of signal transduction analogous to the enterobacterial chemotaxis systems. The protein is Protein FrzA (frzA) of Myxococcus xanthus.